A 414-amino-acid polypeptide reads, in one-letter code: Na(+)/H(+) antiporter NhaA (414 aa).

11 helical membrane-spanning segments follow: residues 22–42, 61–81, 101–121, 131–151, 171–191, 215–235, 239–259, 281–301, 308–328, 343–363, and 379–399; these read VGGF…NSPF, LHLT…FFVV, MLPI…YAAF, GWGI…AVVG, LGAI…LPLI, SAAL…WALV, GVHA…VPLA, VLPV…LGAV, LGII…GSWV, WIDI…SLLI, and KAGV…VLAV.

The protein belongs to the NhaA Na(+)/H(+) (TC 2.A.33) antiporter family.

It localises to the cell membrane. It carries out the reaction Na(+)(in) + 2 H(+)(out) = Na(+)(out) + 2 H(+)(in). Its function is as follows. Na(+)/H(+) antiporter that extrudes sodium in exchange for external protons. In Thermobifida fusca (strain YX), this protein is Na(+)/H(+) antiporter NhaA.